A 232-amino-acid chain; its full sequence is Ribosomal RNA small subunit methyltransferase G (232 aa).

S-adenosyl-L-methionine is bound by residues glycine 93, leucine 98, 144-145 (VE), and arginine 163.

This sequence belongs to the methyltransferase superfamily. RNA methyltransferase RsmG family.

The protein resides in the cytoplasm. The catalysed reaction is guanosine(527) in 16S rRNA + S-adenosyl-L-methionine = N(7)-methylguanosine(527) in 16S rRNA + S-adenosyl-L-homocysteine. Its function is as follows. Specifically methylates the N7 position of guanine in position 527 of 16S rRNA. The protein is Ribosomal RNA small subunit methyltransferase G of Burkholderia pseudomallei (strain 1710b).